Consider the following 276-residue polypeptide: Undecaprenyl-diphosphatase (276 aa).

Helical transmembrane passes span methionine 1–valine 21, alanine 39–phenylalanine 59, tyrosine 84–phenylalanine 104, leucine 115–tyrosine 135, phenylalanine 188–alanine 208, glutamine 222–leucine 242, and phenylalanine 253–valine 273.

It belongs to the UppP family.

The protein localises to the cell membrane. It catalyses the reaction di-trans,octa-cis-undecaprenyl diphosphate + H2O = di-trans,octa-cis-undecaprenyl phosphate + phosphate + H(+). In terms of biological role, catalyzes the dephosphorylation of undecaprenyl diphosphate (UPP). Confers resistance to bacitracin. The protein is Undecaprenyl-diphosphatase of Mycolicibacterium vanbaalenii (strain DSM 7251 / JCM 13017 / BCRC 16820 / KCTC 9966 / NRRL B-24157 / PYR-1) (Mycobacterium vanbaalenii).